Consider the following 93-residue polypeptide: Small ribosomal subunit protein bS16 (93 aa).

This sequence belongs to the bacterial ribosomal protein bS16 family.

The sequence is that of Small ribosomal subunit protein bS16 from Dictyoglomus thermophilum (strain ATCC 35947 / DSM 3960 / H-6-12).